The primary structure comprises 315 residues: NAD-dependent protein deacylase sirtuin-5, mitochondrial (315 aa).

A mitochondrion-targeting transit peptide spans 1-39; the sequence is MSLLHFATRRLILQVLRELGLKAPPVHKTLKICIAMSRP. The 273-residue stretch at 40–312 folds into the Deacetylase sirtuin-type domain; sequence SSNMADFRRF…PEALSPHESE (273 aa). 61–80 is an NAD(+) binding site; sequence GAGVSAESGVPTFRGPGGFW. Positions 105 and 108 each coordinate substrate. 143–146 lines the NAD(+) pocket; the sequence is QNID. Catalysis depends on histidine 161, which acts as the Proton acceptor. NAD(+) contacts are provided by residues 254 to 256, 280 to 282, and cysteine 298; these read GTS and NTV.

It belongs to the sirtuin family. Class III subfamily. Monomer. Homodimer. Interacts with CPS1.

It localises to the mitochondrion. Its subcellular location is the cytoplasm. The protein resides in the cytosol. It is found in the nucleus. It catalyses the reaction N(6)-malonyl-L-lysyl-[protein] + NAD(+) + H2O = 2''-O-malonyl-ADP-D-ribose + nicotinamide + L-lysyl-[protein]. The enzyme catalyses N(6)-succinyl-L-lysyl-[protein] + NAD(+) + H2O = 2''-O-succinyl-ADP-D-ribose + nicotinamide + L-lysyl-[protein]. The catalysed reaction is N(6)-glutaryl-L-lysyl-[protein] + NAD(+) + H2O = 2''-O-glutaryl-ADP-D-ribose + nicotinamide + L-lysyl-[protein]. NAD-dependent lysine demalonylase, desuccinylase and deglutarylase that specifically removes malonyl, succinyl and glutaryl groups on target proteins. Activates CPS1 and contributes to the regulation of blood ammonia levels during prolonged fasting: acts by mediating desuccinylation and deglutarylation of CPS1, thereby increasing CPS1 activity in response to elevated NAD levels during fasting. Activates SOD1 by mediating its desuccinylation, leading to reduced reactive oxygen species. Activates SHMT2 by mediating its desuccinylation. Modulates ketogenesis through the desuccinylation and activation of HMGCS2. Has weak NAD-dependent protein deacetylase activity; however this activity may not be physiologically relevant in vivo. Can deacetylate cytochrome c (CYCS) and a number of other proteins in vitro such as UOX. The sequence is that of NAD-dependent protein deacylase sirtuin-5, mitochondrial from Monodelphis domestica (Gray short-tailed opossum).